The following is a 315-amino-acid chain: N-acetylneuraminate lyase (315 aa).

The aceneuramate site is built by Ser-59 and Ser-60. The active-site Proton donor is the Tyr-149. Lys-177 (schiff-base intermediate with substrate) is an active-site residue. The aceneuramate site is built by Ser-179, Gly-202, Asp-204, Glu-205, and Gly-221.

It belongs to the DapA family. NanA subfamily. As to quaternary structure, homotetramer.

It localises to the cytoplasm. The enzyme catalyses aceneuramate = aldehydo-N-acetyl-D-mannosamine + pyruvate. The protein operates within amino-sugar metabolism; N-acetylneuraminate degradation; D-fructose 6-phosphate from N-acetylneuraminate: step 1/5. Its function is as follows. Catalyzes the reversible aldol cleavage of N-acetylneuraminic acid (sialic acid; Neu5Ac) to form pyruvate and N-acetylmannosamine (ManNAc) via a Schiff base intermediate. Cannot use 2,7-anhydro-Neu5Ac. Involved in the degradation of sialic acid, which is present in the host mucus layer and represents a much-coveted source of nutrients for R.gnavus, a prevalent member of the normal gut microbiota. In Mediterraneibacter gnavus (strain ATCC 29149 / DSM 114966 / JCM 6515 / VPI C7-9) (Ruminococcus gnavus), this protein is N-acetylneuraminate lyase.